A 331-amino-acid chain; its full sequence is Aldo-keto reductase YhdN (331 aa).

NADP(+)-binding positions include 20-21 (TW) and D52. Y57 serves as the catalytic Proton donor. NADP(+) is bound by residues Q175, 203–208 (YGSLCR), K214, R227, 280–282 (GAR), and Q286.

Belongs to the aldo/keto reductase family. Aldo/keto reductase 11 subfamily. Monomer.

Functionally, aldo-keto reductase (AKR) that displays broad substrate specificity in vitro. Is able to reduce the standard AKR substrates DL-glyceraldehyde, D-erythrose, methylglyoxal, p-nitrobenzaldehyde, benzaldehyde and butyraldehyde, in the presence of NADPH. Cannot use NADH as a cosubstrate. Does not act on glucose, 2-pyridine carboxyaldehyde, fructose and xylose. The physiological function of this enzyme is not clear. May play a role in bacterial stress response and/or in detoxification of reactive aldehydes. The polypeptide is Aldo-keto reductase YhdN (yhdN) (Bacillus subtilis (strain 168)).